The primary structure comprises 861 residues: Bifunctional uridylyltransferase/uridylyl-removing enzyme (861 aa).

The segment at 1 to 322 is uridylyltransferase; sequence MHTAAAATPA…FPTELGITRT (322 aa). Positions 323 to 679 are uridylyl-removing; it reads INGRFVERQG…ARISPVGEGL (357 aa). Residues 441 to 557 form the HD domain; that stretch reads VDQHILMVVR…RHFADQVGSE (117 aa). 2 ACT domains span residues 680–763 and 792–861; these read QVAV…AEPP and LLSL…ALAI.

Belongs to the GlnD family. Mg(2+) is required as a cofactor.

The enzyme catalyses [protein-PII]-L-tyrosine + UTP = [protein-PII]-uridylyl-L-tyrosine + diphosphate. It catalyses the reaction [protein-PII]-uridylyl-L-tyrosine + H2O = [protein-PII]-L-tyrosine + UMP + H(+). Its activity is regulated as follows. Uridylyltransferase (UTase) activity is inhibited by glutamine, while glutamine activates uridylyl-removing (UR) activity. Its function is as follows. Modifies, by uridylylation and deuridylylation, the PII regulatory proteins (GlnB and homologs), in response to the nitrogen status of the cell that GlnD senses through the glutamine level. Under low glutamine levels, catalyzes the conversion of the PII proteins and UTP to PII-UMP and PPi, while under higher glutamine levels, GlnD hydrolyzes PII-UMP to PII and UMP (deuridylylation). Thus, controls uridylylation state and activity of the PII proteins, and plays an important role in the regulation of nitrogen assimilation and metabolism. This Ralstonia nicotianae (strain ATCC BAA-1114 / GMI1000) (Ralstonia solanacearum) protein is Bifunctional uridylyltransferase/uridylyl-removing enzyme.